The following is a 421-amino-acid chain: Replication-associated recombination protein A (421 aa).

45-52 (GPPGIGKT) lines the ATP pocket.

It belongs to the AAA ATPase family. RarA/MGS1/WRNIP1 subfamily. Homotetramer. Interacts with single-stranded binding protein SsbA. May interact with PriA.

It is found in the cytoplasm. Its subcellular location is the nucleoid. With respect to regulation, ssDNA-dependent ATP hydrolysis is stimulated by single-stranded binding protein SsbA but not by SsbB; in the presence of SsbB, ssDNA secondary structure is removed and RarA's ATPase activity is decreased. The C-terminal 9 residues of SsbA are sufficient to stimulate ATPase activity. In terms of biological role, plays a role in recombination-dependent DNA replication. Positively affects the formation of RecA threads during response to DNA damage, directly or indirectly counteracting the negative RecA modulators RecX and RecU. Stabilizes a RecA-ssDNA complex. In vitro, in the presence of SsbA, inhibits PriA-dependent DNA replication restart of both leading and lagging strands; elongation is insensitive to RarA. Plays a role in response to DNA damage, localizes to the replication fork but also to DNA elsewhere in the cell. Probably required for repair of single-stranded nicks generated by H(2)O(2). Epistatic to RecA, partially represses deletions of the error-prone translesion DNA polymerases (dinB1 and dinB2), genetically interacts with replicative helicase loaders dnaB and dnaD. Epistatic to recF and recO mutations upon DNA damage. A DNA-dependent ATPase stimulated by hairpin structures in circular single-stranded (ss)DNA or ssDNA-dsDNA junctions, by blunt end and 5'-tailed dsDNA and by single-stranded binding protein SsbA protein bound to ssDNA. Preferentially binds ssDNA and replication-fork structures; SsbA stimulates binding to ssDNA. Addition of ATP to the protein has no visible effect in vitro. This Bacillus subtilis (strain 168) protein is Replication-associated recombination protein A.